Reading from the N-terminus, the 952-residue chain is Lysosomal alpha-glucosidase (952 aa).

A signal peptide spans 1–27 (MGVRHPPCSHRLLAVCALVSLATAALL). The propeptide occupies 28-69 (GHILLHDFLLVPRELSGSSPVLEETHPAHQQGASRPGPRDAQ). The disordered stretch occupies residues 47-82 (PVLEETHPAHQQGASRPGPRDAQAHPGRPRAVPTQC). The P-type domain occupies 80–131 (TQCDVPPNSRFDCAPDKAITQEQCEARGCCYIPAKQGLQGAQMGQPWCFFPP). 3 disulfide bridges follow: C82-C109, C92-C108, and C103-C127. N-linked (GlcNAc...) asparagine glycosylation is found at N140, N233, and N390. D404 contacts substrate. N-linked (GlcNAc...) asparagine glycosylation is present at N470. D518 serves as the catalytic Nucleophile. Residue E521 is part of the active site. Cysteines 533 and 558 form a disulfide. Residues R600 and D616 each coordinate substrate. Cysteines 647 and 658 form a disulfide. N652 carries N-linked (GlcNAc...) asparagine glycosylation. H674 is a substrate binding site. N-linked (GlcNAc...) asparagine glycosylation is found at N882 and N925.

The protein belongs to the glycosyl hydrolase 31 family. The different forms of acid glucosidase are obtained by proteolytic processing. Post-translationally, phosphorylation of mannose residues ensures efficient transport of the enzyme to the lysosomes via the mannose 6-phosphate receptor.

Its subcellular location is the lysosome. The protein resides in the lysosome membrane. It catalyses the reaction Hydrolysis of terminal, non-reducing (1-&gt;4)-linked alpha-D-glucose residues with release of alpha-D-glucose.. Functionally, essential for the degradation of glycogen in lysosomes. Has highest activity on alpha-1,4-linked glycosidic linkages, but can also hydrolyze alpha-1,6-linked glucans. The protein is Lysosomal alpha-glucosidase (GAA) of Homo sapiens (Human).